A 64-amino-acid polypeptide reads, in one-letter code: uncharacterized protein (64 aa).

Over residues 1 to 14 the composition is skewed to polar residues; it reads MFNFDPTDQPTDQH. The interval 1–42 is disordered; sequence MFNFDPTDQPTDQHLLQLPTDPHPLQQPIDPHPPPQPNNNLP.

This is an uncharacterized protein from Dictyostelium discoideum (Social amoeba).